Reading from the N-terminus, the 156-residue chain is Envelope glycoprotein L (156 aa).

The N-terminal stretch at methionine 1–glycine 16 is a signal peptide. The interval glycine 21–lysine 141 is interaction with gH. The region spanning glutamate 50–glutamate 156 is the gL alphaherpesvirus-type domain. Cysteine 71 and cysteine 95 are disulfide-bonded.

It belongs to the herpesviridae glycoprotein L (gL) family. Alphaherpesvirinae gL subfamily. As to quaternary structure, interacts with glycoprotein H (gH); this interaction is necessary for the correct processing and cell surface expression of gH. The heterodimer gH/gL seems to interact with gB trimers during fusion. Post-translationally, O-glycosylated, and sialylated.

The protein localises to the virion membrane. It localises to the host cell membrane. It is found in the host Golgi apparatus. Its subcellular location is the host trans-Golgi network. Its function is as follows. The heterodimer glycoprotein H-glycoprotein L is required for the fusion of viral and plasma membranes leading to virus entry into the host cell. Acts as a functional inhibitor of gH and maintains gH in an inhibited form. Upon binding to host integrins, gL dissociates from gH leading to activation of the viral fusion glycoproteins gB and gH. This is Envelope glycoprotein L from Sus scrofa (Pig).